The primary structure comprises 66 residues: Large ribosomal subunit protein bL33c (66 aa).

Belongs to the bacterial ribosomal protein bL33 family.

It is found in the plastid. It localises to the chloroplast. This chain is Large ribosomal subunit protein bL33c, found in Lepidium virginicum (Virginia pepperweed).